The following is a 199-amino-acid chain: Superoxide dismutase [Fe] (199 aa).

Fe cation contacts are provided by His27, His74, Asp158, and His162.

Belongs to the iron/manganese superoxide dismutase family. In terms of assembly, homodimer. It depends on Fe cation as a cofactor.

It catalyses the reaction 2 superoxide + 2 H(+) = H2O2 + O2. Destroys superoxide anion radicals which are normally produced within the cells and which are toxic to biological systems. The chain is Superoxide dismutase [Fe] (SODB) from Babesia bovis.